The following is a 334-amino-acid chain: N,N'-diacetyllegionaminic acid synthase (334 aa).

In terms of domain architecture, AFP-like spans 282 to 334; that stretch reads SLVAKKDIKKGEIFSEGNLTTKRPANGISAMRYEEFLGKIATKNYKEDELIRE.

The enzyme catalyses 2,4-diacetamido-2,4,6-trideoxy-alpha-D-mannopyranose + phosphoenolpyruvate + H2O = N,N-diacetyllegionaminate + phosphate. In terms of biological role, involved in biosynthesis of legionaminic acid (5,7-diamino-3,5,7,9-tetradeoxy-D-glycero-D-galacto-non-2-ulosonic acid)(Leg), a sialic acid-like derivative that is incorporated into flagellin via O-linkage to Ser/Thr. Catalyzes the condensation of 2,4-diacetamido-2,4,6-trideoxymannose with phosphoenolpyruvate (PEP) to give N,N'-diacetyllegionaminic acid. This Campylobacter jejuni subsp. jejuni serotype O:2 (strain ATCC 700819 / NCTC 11168) protein is N,N'-diacetyllegionaminic acid synthase (legI).